The following is a 538-amino-acid chain: Carboxypeptidase 2 (538 aa).

The first 21 residues, 1–21 (MVAYRFLTLISLGLGSHCVSA), serve as a signal peptide directing secretion. Asparagine 46 carries N-linked (GlcNAc...) asparagine glycosylation. The disordered stretch occupies residues 53–76 (PAFTSPGTVSRGFSDGTSGPTRDE). In terms of domain architecture, Peptidase M14 spans 71 to 351 (GPTRDETMEG…VMAKSVLQTA (281 aa)). Zn(2+) contacts are provided by histidine 136, glutamate 139, and histidine 224. Glutamate 322 (proton donor/acceptor) is an active-site residue. Asparagine 393 and asparagine 459 each carry an N-linked (GlcNAc...) asparagine glycan.

It belongs to the peptidase M14 family. The cofactor is Zn(2+).

The protein localises to the secreted. In terms of biological role, extracellular metalloprotease that contributes to pathogenicity. The chain is Carboxypeptidase 2 (MCPB) from Trichophyton rubrum (Athlete's foot fungus).